Consider the following 277-residue polypeptide: uncharacterized protein (277 aa).

Solcar repeat units lie at residues 1–84 (MDQA…SKRV), 96–179 (ISVL…LKLW), and 184–268 (PTSL…VGMH). 6 helical membrane-spanning segments follow: residues 3 to 24 (QAIA…LDLA), 60 to 80 (LSIN…IYDF), 102 to 122 (LCSS…IWVV), 152 to 172 (CYAG…QFMA), 190 to 210 (IFMS…LLVI), and 240 to 261 (FYKG…TFLV).

It belongs to the mitochondrial carrier (TC 2.A.29) family.

Its subcellular location is the mitochondrion inner membrane. This is an uncharacterized protein from Schizosaccharomyces pombe (strain 972 / ATCC 24843) (Fission yeast).